We begin with the raw amino-acid sequence, 359 residues long: Mineralocorticoid receptor (359 aa).

The nuclear receptor DNA-binding region spans 1–49 (FKRAVEGQHNYLCAGRNDCIIDKIRRKNCPACRVRKCLQAGMNLGARKS). Zn(2+)-binding residues include Cys-13, Cys-19, Cys-29, and Cys-32. The NR C4-type zinc finger occupies 13–37 (CAGRNDCIIDKIRRKNCPACRVRKC). Residues 48–96 (KSKKPGKLKGVNEDSTPTKEGGQTCPGSGGGYLSSGEKELSTSPTNALV) are disordered. The segment at 50-107 (KKPGKLKGVNEDSTPTKEGGQTCPGSGGGYLSSGEKELSTSPTNALVPHGPGGGLVTP) is hinge. The region spanning 108-339 (YLPPSICSVL…EFPEMLVEII (232 aa)) is the NR LBD domain. Residues Asn-145 and Gln-151 each contribute to the 21-hydroxyprogesterone site. Residues Asn-145 and Gln-151 each contribute to the aldosterone site. The progesterone site is built by Asn-145 and Gln-151. Residues 157-160 (KWAK) are important for coactivator binding. Residues Arg-192 and Thr-320 each coordinate 21-hydroxyprogesterone. Aldosterone contacts are provided by Arg-192 and Thr-320. The progesterone site is built by Arg-192 and Thr-320.

The protein belongs to the nuclear hormone receptor family. NR3 subfamily.

The protein resides in the cytoplasm. Its subcellular location is the nucleus. In terms of biological role, receptor for both mineralocorticoids (MC) such as cortisol. Binds to mineralocorticoid response elements (MRE) and transactivates target genes. The effect of MC is to increase ion and water transport and thus raise extracellular fluid volume and blood pressure and lower potassium levels. The polypeptide is Mineralocorticoid receptor (nr3c2) (Oncorhynchus mykiss (Rainbow trout)).